Consider the following 584-residue polypeptide: Isopropyl malate synthase htyA (584 aa).

A Pyruvate carboxyltransferase domain is found at 39-317 (PIWLSTDLRD…ETGLDFSNLP (279 aa)).

Belongs to the alpha-IPM synthase/homocitrate synthase family. LeuA type 2 subfamily.

It catalyses the reaction 3-methyl-2-oxobutanoate + acetyl-CoA + H2O = (2S)-2-isopropylmalate + CoA + H(+). Its pathway is antifungal biosynthesis. Its function is as follows. Isopropyl malate synthase; part of the gene cluster that mediates the de novo generation of L-homotyrosine from acetyl-CoA and 4-hydroxyphenyl-pyruvate. L-homotyrosine is a building block of echinocandin B, a fungal lipidated cyclic hexapeptide that acts as an antifungal agent. L-homotyrosine 4-hydroxyphenyl-pyruvate first undergoes an aldol-type condensation by htyA with the C-2 of acetyl-CoA followed by the release of CoA to form 2-(4-hydroxybenzyl)-malate. This is followed by isomerization of 2-(4-hydroxy-benzyl)-malate to 3-(4-hydroxybenzyl)-malate by htyD. Thereafter, 3-(4-hydroxybenzyl)-malate undergoes decarboxylation and oxidation to form 2-oxo-4-(4-hydroxybenzyl)butanoic acid, coupled to reduction of NAD(+) to NADH by htyC. The product then undergoes transamination catalyzed by htyB to form L-homotyrosine. This Aspergillus rugulosus (Emericella rugulosa) protein is Isopropyl malate synthase htyA.